The chain runs to 231 residues: Large ribosomal subunit protein uL1 (231 aa).

This sequence belongs to the universal ribosomal protein uL1 family. As to quaternary structure, part of the 50S ribosomal subunit.

Its function is as follows. Binds directly to 23S rRNA. The L1 stalk is quite mobile in the ribosome, and is involved in E site tRNA release. In terms of biological role, protein L1 is also a translational repressor protein, it controls the translation of the L11 operon by binding to its mRNA. In Saccharophagus degradans (strain 2-40 / ATCC 43961 / DSM 17024), this protein is Large ribosomal subunit protein uL1.